The following is a 72-amino-acid chain: Small ribosomal subunit protein bS18 (72 aa).

The protein belongs to the bacterial ribosomal protein bS18 family. In terms of assembly, part of the 30S ribosomal subunit. Forms a tight heterodimer with protein bS6.

Binds as a heterodimer with protein bS6 to the central domain of the 16S rRNA, where it helps stabilize the platform of the 30S subunit. This Francisella tularensis subsp. holarctica (strain OSU18) protein is Small ribosomal subunit protein bS18.